A 116-amino-acid polypeptide reads, in one-letter code: MAGRRGDSEQQLLTPVRIIKILYQSNPYPKPEGTRQARRNRRRRWRARQRQIREISQRVLSSCLGRSTEPVPLQLPPLERLSLNCDEDSGQGTEGELGSPQIPVEPDTVLGSGDKE.

Phosphoserine; by host CK2 is present on Ser-8. A homomultimerization region spans residues Ile-18–Asn-26. Disordered stretches follow at residues Ser-25–Gln-49 and Ser-82–Glu-116. Positions Thr-34–Arg-50 match the Nuclear localization signal and RNA-binding (RRE) motif. Positions Gln-36 to Gln-49 are enriched in basic residues. A Nuclear export signal and binding to XPO1 motif is present at residues Leu-73–Asn-84. Ser-99 carries the post-translational modification Phosphoserine; by host.

It belongs to the HIV-1 REV protein family. Homomultimer; when bound to the RRE. Multimeric assembly is essential for activity and may involve XPO1. Binds to human KPNB1, XPO1, TNPO1, RANBP5 and IPO7. Interacts with the viral Integrase. Interacts with human KHDRBS1. Interacts with human NAP1; this interaction decreases Rev multimerization and stimulates its activity. Interacts with human DEAD-box helicases DDX3 and DDX24; these interactions may serve for viral RNA export to the cytoplasm and packaging, respectively. Interacts with human PSIP1; this interaction may inhibit HIV-1 DNA integration by promoting dissociation of the Integrase-LEDGF/p75 complex. Post-translationally, asymmetrically arginine dimethylated at one site by host PRMT6. Methylation impairs the RNA-binding activity and export of viral RNA from the nucleus to the cytoplasm. In terms of processing, phosphorylated by protein kinase CK2. Presence of, and maybe binding to the N-terminus of the regulatory beta subunit of CK2 is necessary for CK2-mediated Rev's phosphorylation.

It is found in the host nucleus. It localises to the host nucleolus. The protein localises to the host cytoplasm. Its function is as follows. Escorts unspliced or incompletely spliced viral pre-mRNAs (late transcripts) out of the nucleus of infected cells. These pre-mRNAs carry a recognition sequence called Rev responsive element (RRE) located in the env gene, that is not present in fully spliced viral mRNAs (early transcripts). This function is essential since most viral proteins are translated from unspliced or partially spliced pre-mRNAs which cannot exit the nucleus by the pathway used by fully processed cellular mRNAs. Rev itself is translated from a fully spliced mRNA that readily exits the nucleus. Rev's nuclear localization signal (NLS) binds directly to KPNB1/Importin beta-1 without previous binding to KPNA1/Importin alpha-1. KPNB1 binds to the GDP bound form of RAN (Ran-GDP) and targets Rev to the nucleus. In the nucleus, the conversion from Ran-GDP to Ran-GTP dissociates Rev from KPNB1 and allows Rev's binding to the RRE in viral pre-mRNAs. Rev multimerization on the RRE via cooperative assembly exposes its nuclear export signal (NES) to the surface. Rev can then form a complex with XPO1/CRM1 and Ran-GTP, leading to nuclear export of the complex. Conversion from Ran-GTP to Ran-GDP mediates dissociation of the Rev/RRE/XPO1/RAN complex, so that Rev can return to the nucleus for a subsequent round of export. Beside KPNB1, also seems to interact with TNPO1/Transportin-1, RANBP5/IPO5 and IPO7/RANBP7 for nuclear import. The nucleoporin-like HRB/RIP is an essential cofactor that probably indirectly interacts with Rev to release HIV RNAs from the perinuclear region to the cytoplasm. This Human immunodeficiency virus type 1 group M subtype K (isolate 97ZR-EQTB11) (HIV-1) protein is Protein Rev.